The following is a 159-amino-acid chain: Phosphopantetheine adenylyltransferase (159 aa).

Serine 9 contributes to the substrate binding site. Residues serine 9–phenylalanine 10 and histidine 17 contribute to the ATP site. Substrate contacts are provided by lysine 41, isoleucine 75, and lysine 89. Residues glycine 90–arginine 92, glutamate 100, and leucine 124–serine 130 contribute to the ATP site.

This sequence belongs to the bacterial CoaD family. Homohexamer. The cofactor is Mg(2+).

The protein resides in the cytoplasm. It catalyses the reaction (R)-4'-phosphopantetheine + ATP + H(+) = 3'-dephospho-CoA + diphosphate. The protein operates within cofactor biosynthesis; coenzyme A biosynthesis; CoA from (R)-pantothenate: step 4/5. Reversibly transfers an adenylyl group from ATP to 4'-phosphopantetheine, yielding dephospho-CoA (dPCoA) and pyrophosphate. The sequence is that of Phosphopantetheine adenylyltransferase from Bifidobacterium animalis subsp. lactis (strain AD011).